The following is a 214-amino-acid chain: Cytochrome c biogenesis ATP-binding export protein CcmA (214 aa).

Residues 4-214 (LAVDQLTVSR…FDHGFDGAFL (211 aa)) enclose the ABC transporter domain. 36–43 (GPNGIGKT) contacts ATP.

Belongs to the ABC transporter superfamily. CcmA exporter (TC 3.A.1.107) family. As to quaternary structure, the complex is composed of two ATP-binding proteins (CcmA) and two transmembrane proteins (CcmB).

The protein resides in the cell inner membrane. The catalysed reaction is heme b(in) + ATP + H2O = heme b(out) + ADP + phosphate + H(+). In terms of biological role, part of the ABC transporter complex CcmAB involved in the biogenesis of c-type cytochromes; once thought to export heme, this seems not to be the case, but its exact role is uncertain. Responsible for energy coupling to the transport system. The polypeptide is Cytochrome c biogenesis ATP-binding export protein CcmA (Rhodobacter capsulatus (strain ATCC BAA-309 / NBRC 16581 / SB1003)).